The chain runs to 434 residues: 3-phosphoshikimate 1-carboxyvinyltransferase (434 aa).

Residues lysine 22, serine 23, and arginine 27 each contribute to the 3-phosphoshikimate site. Lysine 22 lines the phosphoenolpyruvate pocket. Glycine 93 and arginine 121 together coordinate phosphoenolpyruvate. 6 residues coordinate 3-phosphoshikimate: serine 168, serine 169, glutamine 170, serine 199, aspartate 320, and lysine 347. Glutamine 170 is a phosphoenolpyruvate binding site. Aspartate 320 (proton acceptor) is an active-site residue. Phosphoenolpyruvate-binding residues include arginine 351, arginine 394, and lysine 419.

It belongs to the EPSP synthase family. Monomer.

It localises to the cytoplasm. It catalyses the reaction 3-phosphoshikimate + phosphoenolpyruvate = 5-O-(1-carboxyvinyl)-3-phosphoshikimate + phosphate. The protein operates within metabolic intermediate biosynthesis; chorismate biosynthesis; chorismate from D-erythrose 4-phosphate and phosphoenolpyruvate: step 6/7. Its function is as follows. Catalyzes the transfer of the enolpyruvyl moiety of phosphoenolpyruvate (PEP) to the 5-hydroxyl of shikimate-3-phosphate (S3P) to produce enolpyruvyl shikimate-3-phosphate and inorganic phosphate. The sequence is that of 3-phosphoshikimate 1-carboxyvinyltransferase from Burkholderia multivorans (strain ATCC 17616 / 249).